We begin with the raw amino-acid sequence, 90 residues long: MGSSSFLVLMVSLALVTLVAVEGVKEGIEKAGVCPADNVRCFKSDPPQCHTDQDCLGERKCCYLHCGFKCVIPVKELEEGGNKDEDVSRP.

A signal peptide spans 1 to 23 (MGSSSFLVLMVSLALVTLVAVEG). A WAP domain is found at 27–74 (GIEKAGVCPADNVRCFKSDPPQCHTDQDCLGERKCCYLHCGFKCVIPV). 4 disulfide bridges follow: Cys-34–Cys-62, Cys-41–Cys-66, Cys-49–Cys-61, and Cys-55–Cys-70.

It localises to the secreted. In terms of biological role, antibacterial protein. Putative acid-stable proteinase inhibitor. The chain is WAP four-disulfide core domain protein 12 (WFDC12) from Gorilla gorilla gorilla (Western lowland gorilla).